The sequence spans 139 residues: Large ribosomal subunit protein uL16 (139 aa).

Belongs to the universal ribosomal protein uL16 family. In terms of assembly, part of the 50S ribosomal subunit.

In terms of biological role, binds 23S rRNA and is also seen to make contacts with the A and possibly P site tRNAs. This Crocosphaera subtropica (strain ATCC 51142 / BH68) (Cyanothece sp. (strain ATCC 51142)) protein is Large ribosomal subunit protein uL16.